The primary structure comprises 467 residues: Probable glycerol-3-phosphate dehydrogenase [NAD(+)] 2, cytosolic (467 aa).

Residues 47–52 (GAGAWG), lysine 195, and alanine 234 contribute to the NAD(+) site. A substrate-binding site is contributed by lysine 195. The Proton acceptor role is filled by lysine 284. NAD(+) contacts are provided by arginine 346 and glutamine 374. Residue 346-347 (RN) coordinates substrate.

This sequence belongs to the NAD-dependent glycerol-3-phosphate dehydrogenase family.

It localises to the cytoplasm. It is found in the cytosol. It carries out the reaction sn-glycerol 3-phosphate + NAD(+) = dihydroxyacetone phosphate + NADH + H(+). Its function is as follows. May be involved in cell redox homeostasis. The chain is Probable glycerol-3-phosphate dehydrogenase [NAD(+)] 2, cytosolic from Oryza sativa subsp. japonica (Rice).